The chain runs to 57 residues: MAVPKKRTSISKKRIRKNFWKKKGYFAAVKAFSLAKSVSTGQSKSFFVRQTSNKSLE.

The protein belongs to the bacterial ribosomal protein bL32 family.

The protein resides in the plastid. Its subcellular location is the chloroplast. This chain is Large ribosomal subunit protein bL32c, found in Acorus calamus (Sweet flag).